A 180-amino-acid chain; its full sequence is Ribosome rescue factor SmrB (180 aa).

The region spanning 98-173 (LDLHGLTQLQ…GNAALLVLVA (76 aa)) is the Smr domain.

It belongs to the SmrB family. As to quaternary structure, associates with collided ribosomes, but not with correctly translating polysomes.

In terms of biological role, acts as a ribosome collision sensor. Detects stalled/collided disomes (pairs of ribosomes where the leading ribosome is stalled and a second ribosome has collided with it) and endonucleolytically cleaves mRNA at the 5' boundary of the stalled ribosome. Stalled/collided disomes form a new interface (primarily via the 30S subunits) that binds SmrB. Cleaved mRNA becomes available for tmRNA ligation, leading to ribosomal subunit dissociation and rescue of stalled ribosomes. The sequence is that of Ribosome rescue factor SmrB from Pectobacterium carotovorum subsp. carotovorum (strain PC1).